The primary structure comprises 200 residues: Large ribosomal subunit protein bL25 (200 aa).

The protein belongs to the bacterial ribosomal protein bL25 family. CTC subfamily. In terms of assembly, part of the 50S ribosomal subunit; part of the 5S rRNA/L5/L18/L25 subcomplex. Contacts the 5S rRNA. Binds to the 5S rRNA independently of L5 and L18.

Functionally, this is one of the proteins that binds to the 5S RNA in the ribosome where it forms part of the central protuberance. The chain is Large ribosomal subunit protein bL25 from Pseudomonas fluorescens (strain SBW25).